Here is an 87-residue protein sequence, read N- to C-terminus: Small ribosomal subunit protein bS20 (87 aa).

Basic residues predominate over residues 1 to 11 (MANIKSAKKRA). Residues 1–27 (MANIKSAKKRAVQSEKRRQHNASQRSM) are disordered.

It belongs to the bacterial ribosomal protein bS20 family.

Binds directly to 16S ribosomal RNA. This is Small ribosomal subunit protein bS20 from Actinobacillus succinogenes (strain ATCC 55618 / DSM 22257 / CCUG 43843 / 130Z).